The sequence spans 467 residues: Zinc finger protein 410 (467 aa).

Disordered stretches follow at residues 84–111 (PDGE…SLLQ) and 187–214 (NAKT…PLPQ). 5 C2H2-type zinc fingers span residues 219-243 (LKCT…LKTH), 249-273 (FICP…MRTH), 279-303 (FVCP…LRIH), 309-333 (FLCE…LVVH), and 339-362 (HQCQ…RKHH). Residues Cys221, Cys226, His239, His243, Cys251, Cys256, His269, His273, Cys281, Cys286, His299, His303, Cys311, Cys316, His329, His333, Cys341, Cys344, His357, and His361 each coordinate Zn(2+).

In terms of assembly, interacts with CDKN2A/p14ARF. In terms of processing, O-glycosylated. O-GlcNAcylation may occur in response to increasing glucose levels and affect transcription factor activity. Sumoylated. Sumoylation increases its half-life, possibly by blocking ubiquitin-mediated degradation.

The protein localises to the nucleus. Its subcellular location is the chromosome. Functionally, transcription factor that binds to the sequence motif 5'-CATCCCATAATA-3', and is specifically required to silence expression of fetal hemoglobin in adult erythroid cells. Prevents expression of fetal hemoglobin genes HBG1 and HBG2 through CHD4: acts as a direct transcriptional activator of CHD4, a central component of the NuRD complex that represses transcription of fetal hemoglobin genes HBG1 and HBG2 in erythroid cells. May also activate transcription of matrix-remodeling genes such as MMP1 during fibroblast senescence. May activate transcription of the gap junction gene GJC1, perhaps in response to increasing glucose. However, recent studies suggest that ZNF410 is dedicated to regulate expression of a single gene: CHD4. The polypeptide is Zinc finger protein 410 (Bos taurus (Bovine)).